Here is a 158-residue protein sequence, read N- to C-terminus: Persistence and stress-resistance toxin PasT (158 aa).

The interval 70-158 (GISKTFTTRN…VRAKEVYSAR (89 aa)) is required for resistance of nitrosative stress but not persistence or toxic effects.

The protein belongs to the ribosome association toxin RatA family. In terms of assembly, associates with 50S ribosomes.

Functionally, toxic component of a type II toxin-antitoxin (TA) system. Binds to 50S ribosomal subunits, preventing them from associating with 30S subunits to form 70S ribosomes. In this strain of E.coli low levels of PasT complement operon disruption, however high levels are toxic; their effects are abrogated by high level expression of cognate antitoxin PasI. Plays a role in persistence after antibiotic exposure and survival of nitrosative stress; the toxic and persistence phenotypes are conferred by the same N-terminal region of the protein, while the stress resistance effects can be uncoupled from them in deletion mutants. In Escherichia coli O6:H1 (strain CFT073 / ATCC 700928 / UPEC), this protein is Persistence and stress-resistance toxin PasT (pasT).